The primary structure comprises 333 residues: Cytosolic Fe-S cluster assembly factor NBP35 (333 aa).

Residues Cys-32, Cys-46, Cys-49, and Cys-55 each coordinate [4Fe-4S] cluster. 85-92 (GKGGVGKS) is an ATP binding site. 2 residues coordinate [4Fe-4S] cluster: Cys-258 and Cys-261.

Belongs to the Mrp/NBP35 ATP-binding proteins family. NUBP1/NBP35 subfamily. In terms of assembly, heterotetramer of 2 NBP35 and 2 CFD1 chains. [4Fe-4S] cluster serves as cofactor.

It localises to the cytoplasm. The protein localises to the nucleus. Its function is as follows. Component of the cytosolic iron-sulfur (Fe/S) protein assembly (CIA) machinery. Required for maturation of extramitochondrial Fe-S proteins. The NBP35-CFD1 heterotetramer forms a Fe-S scaffold complex, mediating the de novo assembly of an Fe-S cluster and its transfer to target apoproteins. Required for biogenesis and export of both ribosomal subunits, which may reflect a role in assembly of the Fe/S clusters in RLI1, a protein which performs rRNA processing and ribosome export. The sequence is that of Cytosolic Fe-S cluster assembly factor NBP35 from Eremothecium gossypii (strain ATCC 10895 / CBS 109.51 / FGSC 9923 / NRRL Y-1056) (Yeast).